We begin with the raw amino-acid sequence, 574 residues long: Transmembrane protein 108 (574 aa).

A helical membrane pass occupies residues 9-29 (YCQLLSFLLTLALTKALVLAV). The interaction with SH3GL2 stretch occupies residues 31-169 (EPSPRESLQT…ATTRRPPRPP (139 aa)). 2 disordered regions span residues 32-352 (PSPR…SGVF) and 364-417 (DATV…PRPL). Positions 58–86 (TRLSSVLTLNPTPDGPSSQAAATLETTVS) are enriched in polar residues. Residues 132 to 160 (LPPGDATPTTTLPTKPAGTTSRPTVAPRA) are compositionally biased toward low complexity. Positions 173 to 406 (RKGAGGSTRT…SPAEEEAEAS (234 aa)) are interaction with DST (isoform 1). Over residues 245–271 (FSSTQPQTVSPATAPRSTSRVPPTTSL) the composition is skewed to polar residues. Positions 292–312 (TSPGGEPAATAATGAPASTQP) are enriched in low complexity. The segment covering 316 to 332 (PSQSPHGDVQDSASHSD) has biased composition (polar residues). A helical transmembrane segment spans residues 468 to 488 (IAWVIVAISVPISSCSVLLTV). The interaction with CYFIP2 stretch occupies residues 489–574 (CCMRRKKKTA…FVGNDQVSEI (86 aa)).

As to quaternary structure, interacts with DST (isoform 1). Interacts with SH3GL2. Interacts (via N-terminus) with CYFIP1 and CYFIP2; the interactions associate TMEM108 with the WAVE1 complex. In terms of processing, glycosylated. Expressed in the nervous system tissues, such as hippocampus and spinal cord, is barely detectable in peripheral tissues such as heart, lung, liver, kidney and muscle. In brain, highly expressed in dentate gyrus neurons and expressed in cortex, olfactory bulb, ammon's horn, cerebellum, hypothalamus and striatum.

The protein localises to the membrane. Its subcellular location is the postsynaptic density. It localises to the endosome membrane. It is found in the cell projection. The protein resides in the axon. The protein localises to the dendrite. Its subcellular location is the early endosome. Transmembrane protein required for proper cognitive functions. Involved in the development of dentate gyrus (DG) neuron circuitry, is necessary for AMPA receptors surface expression and proper excitatory postsynaptic currents of DG granule neurons. Regulates the organization and stability of the microtubule network of sensory neurons to allow axonal transport. Through the interaction with DST, mediates the docking of the dynein/dynactin motor complex to vesicle cargos for retrograde axonal transport. In hippocampal neurons, required for BDNF-dependent dendrite outgrowth. Cooperates with SH3GL2 and recruits the WAVE1 complex to facilitate actin-dependent BDNF:NTRK2 early endocytic trafficking and mediate signaling from early endosomes. The polypeptide is Transmembrane protein 108 (Mus musculus (Mouse)).